A 414-amino-acid chain; its full sequence is Transcriptional repressor protein YY1 (414 aa).

Positions 1-170 (MASGDTLYIA…SGGGASSGGG (170 aa)) are interaction with the SMAD1/SMAD4 complex. The span at 32-41 (PVETIETTVV) shows a compositional bias: low complexity. The interval 32–83 (PVETIETTVVGEEEEEDDDDEDGGGGDHGGGGGGHGHAGHHHHHHHHHHHHP) is disordered. Acidic residues predominate over residues 42–55 (GEEEEEDDDDEDGG). Positions 57–67 (GDHGGGGGGHG) are enriched in gly residues. Basic residues predominate over residues 68–83 (HAGHHHHHHHHHHHHP). The interval 118–260 (DDSDGLRAED…YSEYMTGKKL (143 aa)) is gly-rich region involved in interaction with HCFC1. Ser-120 carries the post-translational modification Phosphoserine. The interval 159 to 203 (GKSGGGASSGGGRVKKGGGKKSGKKSYLGGGAGAAGGGGADPGNK) is disordered. The span at 160 to 170 (KSGGGASSGGG) shows a compositional bias: gly residues. Residues 171–182 (RVKKGGGKKSGK) show a composition bias toward basic residues. Glycyl lysine isopeptide (Lys-Gly) (interchain with G-Cter in SUMO2) cross-links involve residues Lys-182 and Lys-183. Over residues 186-199 (LGGGAGAAGGGGAD) the composition is skewed to gly residues. Glycyl lysine isopeptide (Lys-Gly) (interchain with G-Cter in SUMO2) cross-links involve residues Lys-208 and Lys-230. Ser-247 bears the Phosphoserine mark. The interval 257–341 (GKKLPPGGIP…KAFVESSKLK (85 aa)) is involved in nuclear matrix association. Glycyl lysine isopeptide (Lys-Gly) (interchain with G-Cter in SUMO2) cross-links involve residues Lys-286 and Lys-288. The binding to DNA stretch occupies residues 295–414 (TIACPHKGCT…LTHAKAKNNQ (120 aa)). 3 C2H2-type zinc fingers span residues 296–320 (IACP…LHTH), 325–347 (HVCA…QLVH), and 353–377 (FQCT…VRIH). Residues Cys-298, Cys-303, His-316, His-320, Cys-327, Cys-330, His-343, His-347, Cys-355, Cys-360, His-373, and His-377 each contribute to the Zn(2+) site. The interval 333 to 371 (AFVESSKLKRHQLVHTGEKPFQCTFEGCGKRFSLDFNLR) is involved in repression of activated transcription. The interval 371 to 397 (RTHVRIHTGDRPYVCPFDGCNKKFAQS) is involved in masking transactivation domain. Position 378 is a phosphothreonine (Thr-378). The segment at 383–407 (YVCPFDGCNKKFAQSTNLKSHILTH) adopts a C2H2-type 4 zinc-finger fold. Zn(2+) contacts are provided by Cys-385, Cys-390, His-403, and His-407. Glycyl lysine isopeptide (Lys-Gly) (interchain with G-Cter in SUMO2) cross-links involve residues Lys-409 and Lys-411.

This sequence belongs to the YY transcription factor family. In terms of assembly, interacts with YAF2 through the region encompassing the first and second zinc fingers. Component of the chromatin remodeling INO80 complex; specifically part of a complex module associated with the DBINO domain of INO80. Interacts with EED and EZH2; the interactions are indicative for an association with the PRC2/EED-EZH2 complex. Found in a complex with SMAD1 and SMAD4. Interacts with SFMBT2. Found in a complex with YY1, SIN3A and HDAC1. Accessory component of the polycomb repressive deubiquitinase (PR-DUB) complex, at least composed of BAP1, one of ASXL1, ASXL2 or (probably) ASXL3 and one of MBD5 or MBD6; the PR-DUB core associates with a number of accessory proteins, including FOXK1, FOXK2, KDM1B, HCFC1, YY1 and OGT. Interacts (via Gly-rich region) with HCFC1; the interaction is direct. Interacts (via C-terminal zinc-finger domains) with BAP1 (via ULD domain); the interaction is direct and requires HCFC1. Transiently poly-ADP-ribosylated by PARP1 upon DNA damage, with the effect of decreasing affinity of YY1 to its cognate DNA binding sites. In terms of processing, ubiquitinated. Post-translationally, phosphorylation at Ser-120 by CK2 prevents proteolytic cleavage by caspase-7 (CASP7) during apoptosis. Proteolytically cleaved by caspase-7 (CASP7) in response to apoptosis. Phosphorylation at Ser-120 protects against proteolytic cleavage. Expressed in ovary and, at lower levels, in testis.

The protein resides in the nucleus. It is found in the nucleus matrix. It localises to the cytoplasm. In terms of biological role, multifunctional transcription factor that exhibits positive and negative control on a large number of cellular and viral genes by binding to sites overlapping the transcription start site. Binds to the consensus sequence 5'-CCGCCATNTT-3'; some genes have been shown to contain a longer binding motif allowing enhanced binding; the initial CG dinucleotide can be methylated greatly reducing the binding affinity. The effect on transcription regulation is depending upon the context in which it binds and diverse mechanisms of action include direct activation or repression, indirect activation or repression via cofactor recruitment, or activation or repression by disruption of binding sites or conformational DNA changes. Its activity is regulated by transcription factors and cytoplasmic proteins that have been shown to abrogate or completely inhibit YY1-mediated activation or repression. Binds to the upstream conserved region (UCR) (5'-CGCCATTTT-3') of Moloney murine leukemia virus (MuLV). Acts synergistically with the SMAD1 and SMAD4 in bone morphogenetic protein (BMP)-mediated cardiac-specific gene expression. Binds to SMAD binding elements (SBEs) (5'-GTCT/AGAC-3') within BMP response element (BMPRE) of cardiac activating regions. Proposed to recruit the PRC2/EED-EZH2 complex to target genes that are transcriptional repressed. Involved in DNA repair. In vitro, binds to DNA recombination intermediate structures (Holliday junctions). Involved in spermatogenesis and may play a role in meiotic DNA double-strand break repair. Plays a role in regulating enhancer activation. Recruits the PR-DUB complex to specific gene-regulatory regions. Its function is as follows. Proposed core component of the chromatin remodeling INO80 complex which is involved in transcriptional regulation, DNA replication and probably DNA repair; proposed to target the INO80 complex to YY1-responsive elements. The protein is Transcriptional repressor protein YY1 (Yy1) of Mus musculus (Mouse).